Here is a 484-residue protein sequence, read N- to C-terminus: Palmitoyltransferase ZDHHC1 (484 aa).

Polar residues-rich tracts occupy residues 1–11 (MNICNKPSNKT) and 19–34 (TAPS…LQGQ). Residues 1–38 (MNICNKPSNKTAPEKSVWTAPSQDSGPSPELQGQRSRR) form a disordered region. Residues 1–49 (MNICNKPSNKTAPEKSVWTAPSQDSGPSPELQGQRSRRNGWSWPPHPLQ) are Cytoplasmic-facing. The tract at residues 1–268 (MNICNKPSNK…GHLLCFHIYL (268 aa)) is mediates interaction with STING1. The chain crosses the membrane as a helical span at residues 50–70 (IVAWLLYLFFAVIGFGVLVPL). Topologically, residues 71–74 (LPHH) are lumenal. Residues 75-95 (WVPAGYACMGAIFAGHLVVHL) form a helical membrane-spanning segment. Residues 96 to 182 (TAVSIDPADA…YRLFLHSVAS (87 aa)) are Cytoplasmic-facing. The DHHC domain occupies 131–181 (LHCNLCDVDVSARSKHCSACNKCVCGFDHHCKWLNNCVGERNYRLFLHSVA). Catalysis depends on Cys161, which acts as the S-palmitoyl cysteine intermediate. The chain crosses the membrane as a helical span at residues 183–203 (ALLGVLLLVLVATYVFVEFFV). The Lumenal portion of the chain corresponds to 204-238 (NPMRLRTNQHFEVLKNHTDVWFVFLPAAPVETQAP). The chain crosses the membrane as a helical span at residues 239 to 259 (AILALAALLILLGLLSTALLG). At 260-484 (HLLCFHIYLM…GTPGGGDGLP (225 aa)) the chain is on the cytoplasmic side. Disordered stretches follow at residues 341-415 (TQGQ…VHAG) and 444-484 (LGAP…DGLP). A compositionally biased stretch (basic residues) spans 364–374 (PQKKRKRRVYR). A compositionally biased stretch (basic and acidic residues) spans 380-392 (VLDRELPLPRLRE). Over residues 395-415 (TPSRRSSSSSDSTSASPVHAG) the composition is skewed to low complexity. Over residues 475–484 (GTPGGGDGLP) the composition is skewed to gly residues.

This sequence belongs to the DHHC palmitoyltransferase family. In terms of assembly, interacts with STING1; ZDHHC1 constitutively interacts with STING1 and in presence of DNA viruses activates it by promoting its cGAMP-induced oligomerization and the recruitment of downstream signaling components. Expressed at high levels in fetal lung and heart. Expressed at lower levels in fetal liver and brain. Also detected in adult islet cells of pancreas, Leydig cells of testis, retina and molecular layer of cerebellum.

It localises to the endosome membrane. The protein resides in the endoplasmic reticulum membrane. The protein localises to the golgi apparatus. It catalyses the reaction L-cysteinyl-[protein] + hexadecanoyl-CoA = S-hexadecanoyl-L-cysteinyl-[protein] + CoA. Its function is as follows. Palmitoyltransferase that catalyzes the addition of palmitate onto various protein substrates, such as NCDN and NLRP3. Has a palmitoyltransferase activity toward NCDN and regulates NCDN association with endosome membranes through this palmitoylation. Acts as an activator of the NLRP3 inflammasome by mediating palmitoylation of 'Cys-130' and 'Cys-958' of NLRP3, thereby promoting NLRP3 phosphorylation and activation by NEK7. Also has a palmitoyltransferase activity-independent function in DNA virus-triggered and CGAS-mediated innate immune response. Functions as an activator of STING1 by promoting its cGAMP-induced oligomerization and the recruitment of downstream signaling components. The protein is Palmitoyltransferase ZDHHC1 of Mus musculus (Mouse).